The primary structure comprises 475 residues: tRNA modification GTPase MnmE (475 aa).

Positions 32, 97, and 136 each coordinate (6S)-5-formyl-5,6,7,8-tetrahydrofolate. The TrmE-type G domain maps to 232 to 396; the sequence is GVATVIAGRP…LKSRMSSMVE (165 aa). Residues 242 to 247, 261 to 267, 286 to 289, and 377 to 379 contribute to the GTP site; these read NAGKST, SHMPGTT, DTAG, and SAR. Mg(2+)-binding residues include serine 246 and threonine 267. Position 475 (lysine 475) interacts with (6S)-5-formyl-5,6,7,8-tetrahydrofolate.

Belongs to the TRAFAC class TrmE-Era-EngA-EngB-Septin-like GTPase superfamily. TrmE GTPase family. In terms of assembly, homodimer. Heterotetramer of two MnmE and two MnmG subunits. Requires K(+) as cofactor.

Its subcellular location is the cytoplasm. In terms of biological role, exhibits a very high intrinsic GTPase hydrolysis rate. Involved in the addition of a carboxymethylaminomethyl (cmnm) group at the wobble position (U34) of certain tRNAs, forming tRNA-cmnm(5)s(2)U34. The polypeptide is tRNA modification GTPase MnmE (Chlorobium phaeobacteroides (strain DSM 266 / SMG 266 / 2430)).